A 409-amino-acid chain; its full sequence is Tryptophan synthase beta chain 1 (409 aa).

Position 104 is an N6-(pyridoxal phosphate)lysine (Lys104).

Belongs to the TrpB family. In terms of assembly, tetramer of two alpha and two beta chains. The cofactor is pyridoxal 5'-phosphate.

It carries out the reaction (1S,2R)-1-C-(indol-3-yl)glycerol 3-phosphate + L-serine = D-glyceraldehyde 3-phosphate + L-tryptophan + H2O. The protein operates within amino-acid biosynthesis; L-tryptophan biosynthesis; L-tryptophan from chorismate: step 5/5. The beta subunit is responsible for the synthesis of L-tryptophan from indole and L-serine. This chain is Tryptophan synthase beta chain 1 (trpB1), found in Nostoc sp. (strain PCC 7120 / SAG 25.82 / UTEX 2576).